Here is a 211-residue protein sequence, read N- to C-terminus: 3,4-dihydroxy-2-butanone 4-phosphate synthase (211 aa).

D-ribulose 5-phosphate contacts are provided by residues Arg-37 to Glu-38, Asp-42, Arg-150 to Thr-154, and Glu-174. A Mg(2+)-binding site is contributed by Glu-38. His-153 provides a ligand contact to Mg(2+).

The protein belongs to the DHBP synthase family. As to quaternary structure, homodimer. It depends on Mg(2+) as a cofactor. Requires Mn(2+) as cofactor.

The catalysed reaction is D-ribulose 5-phosphate = (2S)-2-hydroxy-3-oxobutyl phosphate + formate + H(+). Its pathway is cofactor biosynthesis; riboflavin biosynthesis; 2-hydroxy-3-oxobutyl phosphate from D-ribulose 5-phosphate: step 1/1. In terms of biological role, catalyzes the conversion of D-ribulose 5-phosphate to formate and 3,4-dihydroxy-2-butanone 4-phosphate. In Baumannia cicadellinicola subsp. Homalodisca coagulata, this protein is 3,4-dihydroxy-2-butanone 4-phosphate synthase.